The sequence spans 426 residues: Alpha-ionylideneethane synthase abl3 (426 aa).

This sequence belongs to the alpha-ionylideneethane synthase family.

It participates in hormone biosynthesis. Its function is as follows. Alpha-ionylideneethane synthase; part of the gene cluster that mediates the biosynthesis of abscisic acid (ABA), a phytohormone that acts antagonistically toward salicylic acid (SA), jasmonic acid (JA) and ethylene (ETH) signaling, to impede plant defense responses. The first step of the pathway catalyzes the reaction from farnesyl diphosphate to alpha-ionylideneethane performed by the alpha-ionylideneethane synthase abl3 via a three-step reaction mechanism involving 2 neutral intermediates, beta-farnesene and allofarnesene. The cytochrome P450 monooxygenase abl1 might then be involved in the conversion of alpha-ionylideneethane to alpha-ionylideneacetic acid. Alpha-ionylideneacetic acid is further converted to abscisic acid in 2 steps involving the cytochrome P450 monooxygenase abl2 and the short-chain dehydrogenase/reductase abl4, via the intermediates 1'-deoxy-ABA or 1',4'-trans-diol-ABA, depending on the order of action of these 2 enzymes. Abl2 is responsible for the hydroxylation of carbon atom C-1' and abl4 might be involved in the oxidation of the C-4' carbon atom. This chain is Alpha-ionylideneethane synthase abl3, found in Leptosphaeria maculans (strain JN3 / isolate v23.1.3 / race Av1-4-5-6-7-8) (Blackleg fungus).